The sequence spans 222 residues: Methionine import system permease protein MetP (222 aa).

The region spanning 18–212 (TYETLYMTLI…IIVFIIQIIG (195 aa)) is the ABC transmembrane type-1 domain. Transmembrane regions (helical) follow at residues 25-45 (TLIS…LLFL), 73-93 (FLIL…TILG), 97-117 (ALPA…EIAL), 152-172 (ISGI…AGAI), and 195-215 (FVAT…GDLI).

The protein belongs to the binding-protein-dependent transport system permease family. CysTW subfamily. The complex is composed of two ATP-binding proteins (MetN), two transmembrane proteins (MetP) and a solute-binding protein (MetQ).

Its subcellular location is the cell membrane. In terms of biological role, part of the ABC transporter complex MetNPQ involved in methionine import. Responsible for the translocation of the substrate across the membrane. It has also been shown to be involved in methionine sulfoxide transport. This is Methionine import system permease protein MetP (metP) from Bacillus subtilis (strain 168).